Here is a 69-residue protein sequence, read N- to C-terminus: Large ribosomal subunit protein uL29 (69 aa).

It belongs to the universal ribosomal protein uL29 family.

This is Large ribosomal subunit protein uL29 from Clostridium perfringens (strain ATCC 13124 / DSM 756 / JCM 1290 / NCIMB 6125 / NCTC 8237 / Type A).